The chain runs to 155 residues: UPF0178 protein mlr0875 (155 aa).

This sequence belongs to the UPF0178 family.

In Mesorhizobium japonicum (strain LMG 29417 / CECT 9101 / MAFF 303099) (Mesorhizobium loti (strain MAFF 303099)), this protein is UPF0178 protein mlr0875.